The primary structure comprises 360 residues: Histidinol-phosphate aminotransferase (360 aa).

The residue at position 208 (Lys208) is an N6-(pyridoxal phosphate)lysine.

The protein belongs to the class-II pyridoxal-phosphate-dependent aminotransferase family. Histidinol-phosphate aminotransferase subfamily. In terms of assembly, homodimer. Requires pyridoxal 5'-phosphate as cofactor.

The catalysed reaction is L-histidinol phosphate + 2-oxoglutarate = 3-(imidazol-4-yl)-2-oxopropyl phosphate + L-glutamate. It participates in amino-acid biosynthesis; L-histidine biosynthesis; L-histidine from 5-phospho-alpha-D-ribose 1-diphosphate: step 7/9. The polypeptide is Histidinol-phosphate aminotransferase (hisC) (Lactococcus lactis subsp. lactis (strain IL1403) (Streptococcus lactis)).